The following is a 273-amino-acid chain: Large ribosomal subunit protein uL29m (273 aa).

A compositionally biased stretch (basic and acidic residues) spans 247–258 (PLRHDRWEKGQE). The segment at 247 to 273 (PLRHDRWEKGQEENSGGETEDGNAPSN) is disordered.

This sequence belongs to the universal ribosomal protein uL29 family. In terms of assembly, component of the mitochondrial large ribosomal subunit. Mature mitochondrial ribosomes consist of a small (37S) and a large (54S) subunit. The 37S subunit contains at least 33 different proteins and 1 molecule of RNA (15S). The 54S subunit contains at least 45 different proteins and 1 molecule of RNA (21S).

The protein resides in the mitochondrion. The chain is Large ribosomal subunit protein uL29m (mrpl4) from Aspergillus niger (strain ATCC MYA-4892 / CBS 513.88 / FGSC A1513).